A 312-amino-acid chain; its full sequence is Phosphoribosylaminoimidazole-succinocarboxamide synthase (312 aa).

The protein belongs to the SAICAR synthetase family.

The enzyme catalyses 5-amino-1-(5-phospho-D-ribosyl)imidazole-4-carboxylate + L-aspartate + ATP = (2S)-2-[5-amino-1-(5-phospho-beta-D-ribosyl)imidazole-4-carboxamido]succinate + ADP + phosphate + 2 H(+). Its pathway is purine metabolism; IMP biosynthesis via de novo pathway; 5-amino-1-(5-phospho-D-ribosyl)imidazole-4-carboxamide from 5-amino-1-(5-phospho-D-ribosyl)imidazole-4-carboxylate: step 1/2. The sequence is that of Phosphoribosylaminoimidazole-succinocarboxamide synthase from Legionella pneumophila (strain Lens).